A 346-amino-acid chain; its full sequence is 3-isopropylmalate dehydrogenase (346 aa).

Position 76–87 (76–87 (GPKWTDPNNRPE)) interacts with NAD(+). Substrate is bound by residues Arg-94, Arg-104, Arg-132, and Asp-217. Mg(2+) is bound by residues Asp-217, Asp-241, and Asp-245. Residue 275–287 (GSAPDIANQDIAN) coordinates NAD(+).

This sequence belongs to the isocitrate and isopropylmalate dehydrogenases family. LeuB type 1 subfamily. As to quaternary structure, homodimer. Mg(2+) serves as cofactor. It depends on Mn(2+) as a cofactor.

Its subcellular location is the cytoplasm. It carries out the reaction (2R,3S)-3-isopropylmalate + NAD(+) = 4-methyl-2-oxopentanoate + CO2 + NADH. It functions in the pathway amino-acid biosynthesis; L-leucine biosynthesis; L-leucine from 3-methyl-2-oxobutanoate: step 3/4. Functionally, catalyzes the oxidation of 3-carboxy-2-hydroxy-4-methylpentanoate (3-isopropylmalate) to 3-carboxy-4-methyl-2-oxopentanoate. The product decarboxylates to 4-methyl-2 oxopentanoate. In Staphylococcus saprophyticus subsp. saprophyticus (strain ATCC 15305 / DSM 20229 / NCIMB 8711 / NCTC 7292 / S-41), this protein is 3-isopropylmalate dehydrogenase.